Here is a 1198-residue protein sequence, read N- to C-terminus: Phosphatidylinositol-3,5-bisphosphate 3-phosphatase MTMR3 (1198 aa).

The residue at position 8 (Ser-8) is a Phosphoserine. Residues 155–576 enclose the Myotubularin phosphatase domain; sequence EHVTSRFKNE…RNLMLWSAVY (422 aa). The span at 265-280 shows a compositional bias: polar residues; sequence SRSSGSKLSTRNTSRD. Positions 265–285 are disordered; sequence SRSSGSKLSTRNTSRDFPNGG. A 1,2-diacyl-sn-glycero-3-phospho-(1D-myo-inositol-3,5-bisphosphate)-binding residues include Asn-326, Asn-351, and Ile-352. Positions 326, 351, and 352 each coordinate a 1,2-diacyl-sn-glycero-3-phospho-(1D-myo-inositol-3-phosphate). Catalysis depends on Cys-413, which acts as the Phosphocysteine intermediate. 8 residues coordinate a 1,2-diacyl-sn-glycero-3-phospho-(1D-myo-inositol-3,5-bisphosphate): Ser-414, Asp-415, Gly-416, Trp-417, Asp-418, Arg-419, Lys-455, and Arg-459. Residues Ser-414, Asp-415, Gly-416, Trp-417, Asp-418, and Arg-419 each contribute to the a 1,2-diacyl-sn-glycero-3-phospho-(1D-myo-inositol-3-phosphate) site. Arg-459 lines the a 1,2-diacyl-sn-glycero-3-phospho-(1D-myo-inositol-3-phosphate) pocket. The tract at residues 590-612 is disordered; the sequence is CAPYPAPGTSPDDPPLSRLPKTR. The segment covering 593–603 has biased composition (pro residues); the sequence is YPAPGTSPDDP. A phosphoserine mark is found at Ser-613, Ser-633, Ser-647, and Ser-651. Disordered regions lie at residues 650–669, 716–735, and 855–891; these read LSSL…LGKP, EGKE…PEAS, and KSVS…SLVE. The segment covering 716–732 has biased composition (basic and acidic residues); it reads EGKEDPLLEKESRRKTP. Residue Thr-731 is modified to Phosphothreonine. Phosphoserine is present on residues Ser-906 and Ser-909. 2 disordered regions span residues 933-974 and 993-1019; these read ETEN…SRQL and WLHS…DDDG. Positions 999–1010 are enriched in polar residues; sequence GRPSATSSPDQP. Residues 1029–1062 are a coiled coil; it reads QRLRQIESGHQQEVETLKKQVQELKSRLESQYLT. Ser-1064 carries the post-translational modification Phosphoserine. An FYVE-type zinc finger spans residues 1119 to 1179; the sequence is DHLAAHCYAC…VCKSCYSSLH (61 aa). Cys-1125, Cys-1128, Cys-1141, Cys-1144, Cys-1149, Cys-1152, Cys-1171, and Cys-1174 together coordinate Zn(2+).

It belongs to the protein-tyrosine phosphatase family. Non-receptor class myotubularin subfamily. As to quaternary structure, forms heterodimers with MTMR4 that recruit both CEP55 and PLK1; occurs during early mitosis, regulates the phosphorylation of CEP55 by PLK1 and its recruitment to the midbody where it mediates cell abscission. Post-translationally, phosphorylated by CDK1 during mitosis.

It localises to the cytoplasm. Its subcellular location is the cytosol. The protein localises to the membrane. The enzyme catalyses a 1,2-diacyl-sn-glycero-3-phospho-(1D-myo-inositol-3,5-bisphosphate) + H2O = a 1,2-diacyl-sn-glycero-3-phospho-(1D-myo-inositol-5-phosphate) + phosphate. It carries out the reaction a 1,2-diacyl-sn-glycero-3-phospho-(1D-myo-inositol-3-phosphate) + H2O = a 1,2-diacyl-sn-glycero-3-phospho-(1D-myo-inositol) + phosphate. It catalyses the reaction 1,2-dihexadecanoyl-sn-glycero-3-phospho-(1D-myo-inositol-3-phosphate) + H2O = 1,2-dihexadecanoyl-sn-glycero-3-phospho-(1D-myo-inositol) + phosphate. The catalysed reaction is 1,2-dioctanoyl-sn-glycero-3-phospho-(1-D-myo-inositol-3-phosphate) + H2O = 1,2-dioctanoyl-sn-glycero-3-phospho-(1D-myo-inositol) + phosphate. The enzyme catalyses 1,2-dihexadecanoyl-sn-glycero-3-phospho-(1D-myo-inositol-3,5-phosphate) + H2O = 1,2-dihexadecanoyl-sn-glycero-3-phospho-(1D-myo-inositol-5-phosphate) + phosphate. Lipid phosphatase that specifically dephosphorylates the D-3 position of phosphatidylinositol 3-phosphate and phosphatidylinositol 3,5-bisphosphate, generating phosphatidylinositol and phosphatidylinositol 5-phosphate. Decreases the levels of phosphatidylinositol 3-phosphate, a phospholipid found in cell membranes where it acts as key regulator of both cell signaling and intracellular membrane traffic. Could also have a molecular sequestering/adapter activity and regulate biological processes independently of its phosphatase activity. It includes the regulation of midbody abscission during mitotic cytokinesis. The chain is Phosphatidylinositol-3,5-bisphosphate 3-phosphatase MTMR3 from Homo sapiens (Human).